We begin with the raw amino-acid sequence, 652 residues long: UvrABC system protein C (652 aa).

A GIY-YIG domain is found at 19 to 96; the sequence is KTSGVYLWKD…IKKHKPRYNI (78 aa). The UVR domain occupies 203–238; it reads EDVSGTLKEKMKEAAEKKEFEKAARLRDGIQAVYAL.

It belongs to the UvrC family. As to quaternary structure, interacts with UvrB in an incision complex.

The protein localises to the cytoplasm. Functionally, the UvrABC repair system catalyzes the recognition and processing of DNA lesions. UvrC both incises the 5' and 3' sides of the lesion. The N-terminal half is responsible for the 3' incision and the C-terminal half is responsible for the 5' incision. The sequence is that of UvrABC system protein C from Treponema denticola (strain ATCC 35405 / DSM 14222 / CIP 103919 / JCM 8153 / KCTC 15104).